The primary structure comprises 99 residues: Acylphosphatase (99 aa).

The Acylphosphatase-like domain maps to 5 to 97; that stretch reads IRQVMVRGRV…YAGERFSILS (93 aa). Residues Arg-20 and Asn-38 contribute to the active site.

It belongs to the acylphosphatase family.

It catalyses the reaction an acyl phosphate + H2O = a carboxylate + phosphate + H(+). The sequence is that of Acylphosphatase (acyP) from Rhodopseudomonas palustris (strain BisB5).